Reading from the N-terminus, the 235-residue chain is Ribonuclease 3 (235 aa).

Residues 6 to 131 enclose the RNase III domain; sequence IDQLERLTEH…LIAVMYLDGG (126 aa). Glu44 serves as a coordination point for Mg(2+). Residue Asp48 is part of the active site. Asp117 and Glu120 together coordinate Mg(2+). The active site involves Glu120. Positions 156–225 constitute a DRBM domain; sequence DAKTELQEWA…AEKVLRREGI (70 aa).

The protein belongs to the ribonuclease III family. Homodimer. Mg(2+) is required as a cofactor.

The protein resides in the cytoplasm. The catalysed reaction is Endonucleolytic cleavage to 5'-phosphomonoester.. Functionally, digests double-stranded RNA. Involved in the processing of primary rRNA transcript to yield the immediate precursors to the large and small rRNAs (23S and 16S). Processes some mRNAs, and tRNAs when they are encoded in the rRNA operon. Processes pre-crRNA and tracrRNA of type II CRISPR loci if present in the organism. In Bartonella quintana (strain Toulouse) (Rochalimaea quintana), this protein is Ribonuclease 3.